The sequence spans 164 residues: Phosphopantetheine adenylyltransferase (164 aa).

Position 9 (Ser-9) interacts with substrate. Residues 9–10 (SF) and His-17 contribute to the ATP site. Lys-41, Val-78, and Arg-92 together coordinate substrate. ATP is bound by residues 93-95 (GLR), Glu-103, and 128-134 (SRPITAT).

It belongs to the bacterial CoaD family. Homohexamer. The cofactor is Mg(2+).

The protein localises to the cytoplasm. It catalyses the reaction (R)-4'-phosphopantetheine + ATP + H(+) = 3'-dephospho-CoA + diphosphate. It functions in the pathway cofactor biosynthesis; coenzyme A biosynthesis; CoA from (R)-pantothenate: step 4/5. In terms of biological role, reversibly transfers an adenylyl group from ATP to 4'-phosphopantetheine, yielding dephospho-CoA (dPCoA) and pyrophosphate. The protein is Phosphopantetheine adenylyltransferase of Sinorhizobium fredii (strain NBRC 101917 / NGR234).